An 82-amino-acid polypeptide reads, in one-letter code: Small ribosomal subunit protein uS17 (82 aa).

This sequence belongs to the universal ribosomal protein uS17 family. In terms of assembly, part of the 30S ribosomal subunit.

Its function is as follows. One of the primary rRNA binding proteins, it binds specifically to the 5'-end of 16S ribosomal RNA. The protein is Small ribosomal subunit protein uS17 of Shewanella denitrificans (strain OS217 / ATCC BAA-1090 / DSM 15013).